Reading from the N-terminus, the 711-residue chain is Zinc finger CCCH domain-containing protein 43 (711 aa).

A disordered region spans residues 1–49 (MPQDDDWFWGRPTPVVVGDGETTSKPKPPVAGKTKKVEEQHPRRPGEPD). Positions 35–47 (KKVEEQHPRRPGE) are enriched in basic and acidic residues. 3 consecutive C3H1-type zinc fingers follow at residues 44–72 (RPGEPDCSYYVKFGSCKFGISCVYNHPDP), 90–118 (RPGEPDCSYYVKFGSCKFGMNCRFNHPPR), and 157–185 (RPGTGLCSYYMNRGICKFGTNCKFDHPDP). The MIF4G domain maps to 384-637 (LKTLKSILNT…GAISYLIEKE (254 aa)).

In Oryza sativa subsp. japonica (Rice), this protein is Zinc finger CCCH domain-containing protein 43.